Consider the following 1640-residue polypeptide: Clathrin heavy chain 2 (1640 aa).

Alanine 2 is subject to N-acetylalanine. The tract at residues 2–479 is globular terminal domain; the sequence is AQILPVRFQE…TDPMLALSVY (478 aa). WD40-like repeat regions lie at residues 24-67, 68-107, 108-149, 150-195, 196-257, 258-301, and 302-330; these read NIGF…RPIS, AESAIMNPASKVIALKAGKTLQIFNIEMKSKMKAHTMAEE, VIFW…TSLV, GCQV…QPIE, GHAA…PEAQ, NDFP…ISAD, and TIFVTAPHKPTSGIIGVNKKGQVLSVCVE. Serine 67 is modified (phosphoserine). A Phosphotyrosine modification is found at tyrosine 184. Threonine 394 carries the post-translational modification Phosphothreonine. A binding site for the uncoating ATPase, involved in lattice disassembly region spans residues 449–465; that stretch reads EKWLKEDKLECSEELGD. A flexible linker region spans residues 480–523; the sequence is LRANVPSKVIQCFAETGQFQKIVLYAKKVGYTPDWIFLLRGVMK. The interval 524 to 634 is distal segment; that stretch reads ISPEQGLQFS…QALEHYTDLY (111 aa). A heavy chain arm region spans residues 524–1640; sequence ISPEQGLQFS…PLVFDFDGHE (1117 aa). 7 CHCR repeats span residues 537–683, 686–828, 833–972, 979–1124, 1128–1269, 1274–1420, and 1423–1566; these read VQDE…QLCV, ASKY…SEEV, IMAV…QLID, LSET…VKEA, YIRG…FRFA, LHIV…LLIN, and LLVL…RECF. The residue at position 634 (tyrosine 634) is a Phosphotyrosine. Residues 639–1640 form a proximal segment region; sequence AVVHTHLLNP…PLVFDFDGHE (1002 aa). Residue lysine 737 is modified to N6-succinyllysine. Lysine 856 carries the post-translational modification N6-acetyllysine. Tyrosine 899 carries the post-translational modification Phosphotyrosine. Residue serine 1167 is modified to Phosphoserine. Phosphotyrosine is present on tyrosine 1206. The interval 1213 to 1522 is involved in binding clathrin light chain; sequence AAKLLYSNVS…YLYKGNNWWA (310 aa). Serine 1229 is subject to Phosphoserine. At lysine 1441 the chain carries N6-acetyllysine; alternate. Lysine 1441 carries the N6-succinyllysine; alternate modification. Phosphotyrosine is present on residues tyrosine 1477 and tyrosine 1487. Serine 1494 bears the Phosphoserine mark. N6-acetyllysine is present on lysine 1501. Residues 1551-1640 are trimerization; the sequence is QKLLQWFLEE…PLVFDFDGHE (90 aa).

The protein belongs to the clathrin heavy chain family. Clathrin triskelions, composed of 3 heavy chains and 3 light chains, are the basic subunits of the clathrin coat. In the presence of light chains, hub assembly is influenced by both the pH and the concentration of calcium. May interact with OCRL. Interacts with AFTPH/aftiphilin. As to expression, maximal levels in skeletal muscle. High levels in heart and testis. Low expression detected in all other tissues.

Its subcellular location is the cytoplasmic vesicle membrane. The protein localises to the membrane. The protein resides in the coated pit. In terms of biological role, clathrin is the major protein of the polyhedral coat of coated pits and vesicles. Two different adapter protein complexes link the clathrin lattice either to the plasma membrane or to the trans-Golgi network. This Homo sapiens (Human) protein is Clathrin heavy chain 2 (CLTCL1).